We begin with the raw amino-acid sequence, 194 residues long: Probable GTP-binding protein EngB (194 aa).

In terms of domain architecture, EngB-type G spans 23–194; that stretch reads LNGEFVFVGR…YELIEIFGGV (172 aa). Residues 31–38, 57–61, 75–78, 143–146, and 173–175 contribute to the GTP site; these read GRSNVGKS, GKTAS, DLPG, TKMD, and YSA. Serine 38 and threonine 59 together coordinate Mg(2+).

It belongs to the TRAFAC class TrmE-Era-EngA-EngB-Septin-like GTPase superfamily. EngB GTPase family. It depends on Mg(2+) as a cofactor.

In terms of biological role, necessary for normal cell division and for the maintenance of normal septation. The polypeptide is Probable GTP-binding protein EngB (Thermosipho africanus (strain TCF52B)).